The sequence spans 345 residues: Ketol-acid reductoisomerase (NADP(+)) (345 aa).

Residues 2–182 (AKVYHDSSAD…GTTRAGVLET (181 aa)) enclose the KARI N-terminal Rossmann domain. Residues 25 to 28 (YGSQ), Arg-48, Ser-51, Ser-53, and 83 to 86 (DTEQ) contribute to the NADP(+) site. Residue His-108 is part of the active site. NADP(+) is bound at residue Gly-134. One can recognise a KARI C-terminal knotted domain in the interval 183 to 328 (TFKEETETDL…AQLRDMMTFL (146 aa)). The Mg(2+) site is built by Asp-191, Glu-195, Glu-227, and Glu-231. A substrate-binding site is contributed by Ser-252.

Belongs to the ketol-acid reductoisomerase family. It depends on Mg(2+) as a cofactor.

It catalyses the reaction (2R)-2,3-dihydroxy-3-methylbutanoate + NADP(+) = (2S)-2-acetolactate + NADPH + H(+). The enzyme catalyses (2R,3R)-2,3-dihydroxy-3-methylpentanoate + NADP(+) = (S)-2-ethyl-2-hydroxy-3-oxobutanoate + NADPH + H(+). Its pathway is amino-acid biosynthesis; L-isoleucine biosynthesis; L-isoleucine from 2-oxobutanoate: step 2/4. The protein operates within amino-acid biosynthesis; L-valine biosynthesis; L-valine from pyruvate: step 2/4. Functionally, involved in the biosynthesis of branched-chain amino acids (BCAA). Catalyzes an alkyl-migration followed by a ketol-acid reduction of (S)-2-acetolactate (S2AL) to yield (R)-2,3-dihydroxy-isovalerate. In the isomerase reaction, S2AL is rearranged via a Mg-dependent methyl migration to produce 3-hydroxy-3-methyl-2-ketobutyrate (HMKB). In the reductase reaction, this 2-ketoacid undergoes a metal-dependent reduction by NADPH to yield (R)-2,3-dihydroxy-isovalerate. This Koribacter versatilis (strain Ellin345) protein is Ketol-acid reductoisomerase (NADP(+)).